Reading from the N-terminus, the 142-residue chain is Large ribosomal subunit protein uL23 (142 aa).

A Glycyl lysine isopeptide (Lys-Gly) (interchain with G-Cter in SUMO) cross-link involves residue Lys61.

Belongs to the universal ribosomal protein uL23 family. As to quaternary structure, component of the large ribosomal subunit (LSU). Mature yeast ribosomes consist of a small (40S) and a large (60S) subunit. The 40S small subunit contains 1 molecule of ribosomal RNA (18S rRNA) and 33 different proteins (encoded by 57 genes). The large 60S subunit contains 3 rRNA molecules (25S, 5.8S and 5S rRNA) and 46 different proteins (encoded by 81 genes). uL23 is associated with the polypeptide exit tunnel.

It localises to the cytoplasm. Functionally, component of the ribosome, a large ribonucleoprotein complex responsible for the synthesis of proteins in the cell. The small ribosomal subunit (SSU) binds messenger RNAs (mRNAs) and translates the encoded message by selecting cognate aminoacyl-transfer RNA (tRNA) molecules. The large subunit (LSU) contains the ribosomal catalytic site termed the peptidyl transferase center (PTC), which catalyzes the formation of peptide bonds, thereby polymerizing the amino acids delivered by tRNAs into a polypeptide chain. The nascent polypeptides leave the ribosome through a tunnel in the LSU and interact with protein factors that function in enzymatic processing, targeting, and the membrane insertion of nascent chains at the exit of the ribosomal tunnel. uL23 is a major component of the universal docking site for these factors at the polypeptide exit tunnel. In Saccharomyces cerevisiae (strain ATCC 204508 / S288c) (Baker's yeast), this protein is Large ribosomal subunit protein uL23.